We begin with the raw amino-acid sequence, 406 residues long: Bifunctional enzyme Fae/Hps (406 aa).

A formaldehyde-activating enzyme region spans residues 1–164 (MSDIYEIGEA…AEKDRGTHPI (164 aa)). H20 acts as the Proton donor in catalysis. D22, L51, K69, T71, and Q86 together coordinate substrate. Residues 165-406 (MGFKAMKLWN…RLALDEDEKI (242 aa)) form a 3-hexulose-6-phosphate synthase region.

It in the N-terminal section; belongs to the formaldehyde-activating enzyme family. This sequence in the C-terminal section; belongs to the HPS/KGPDC family. HPS subfamily.

The catalysed reaction is 5,6,7,8-tetrahydromethanopterin + formaldehyde = 5,10-methylenetetrahydromethanopterin + H2O. It carries out the reaction D-ribulose 5-phosphate + formaldehyde = D-arabino-hex-3-ulose 6-phosphate. Its pathway is carbohydrate biosynthesis; D-ribose 5-phosphate biosynthesis. Its function is as follows. Catalyzes the condensation of formaldehyde with tetrahydromethanopterin (H(4)MPT) to 5,10-methylenetetrahydromethanopterin. Functionally, catalyzes the reversible formation of ribulose-5-phosphate and formaldehyde from 3-hexulose-6-phosphate. This is Bifunctional enzyme Fae/Hps from Methanosphaera stadtmanae (strain ATCC 43021 / DSM 3091 / JCM 11832 / MCB-3).